A 247-amino-acid polypeptide reads, in one-letter code: MINNYIDITVRLLENILDNEADYVKEAGAKVAESIENDGVIHLFGCGHSHILTEEVFYRAGGLAAIHPILHEPLMLHEGAAASSVLERKNDYAKTFMAEEDIRPGDIMIVLSTSGRNPVPIDVAEIAREKGAFVIVITSLQYSASQKSRHTSGKRLSDTGDIVIDNGAVKGDAVLKSANFDIAFAPTSTVTGAVILQSIFAEAIETMVNDNFTPPVFISGNVENADAHNQALVDKYNERIPLLGMNL.

An SIS domain is found at 31 to 214 (VAESIENDGV…ETMVNDNFTP (184 aa)).

The protein belongs to the UPF0309 family.

This Listeria monocytogenes serotype 4b (strain F2365) protein is UPF0309 protein LMOf2365_2617.